A 169-amino-acid chain; its full sequence is Succinate dehydrogenase cytochrome b560 subunit, mitochondrial (169 aa).

Residues 1–29 constitute a mitochondrion transit peptide; sequence MAALLLRHVGRHCLRAHFSPQLCIRNAVP. Residues 30–65 are Mitochondrial matrix-facing; that stretch reads LGTTAKEEMERFWNKNIGSNRPLSPHITIYSWSLPM. Residues 66–90 form a helical membrane-spanning segment; sequence AMSICHRGTGIALSAGVSLFGMSAL. Residues 91 to 110 are Mitochondrial intermembrane-facing; sequence LLPGNFESYLELVKSLCLGP. Residues 111-139 traverse the membrane as a helical segment; the sequence is ALIHTAKFALVFPLMYHTWNGIRHLMWDL. His127 contributes to the heme b binding site. The Mitochondrial matrix segment spans residues 140 to 146; it reads GKGLKIP. The chain crosses the membrane as a helical span at residues 147-167; it reads QLYQSGVVVLVLTVLSSMGLA. The Mitochondrial intermembrane portion of the chain corresponds to 168–169; sequence AM.

The protein belongs to the cytochrome b560 family. In terms of assembly, component of complex II composed of four subunits: the flavoprotein (FP) SDHA, iron-sulfur protein (IP) SDHB, and a cytochrome b560 composed of SDHC and SDHD. Requires heme b as cofactor.

The protein localises to the mitochondrion inner membrane. The protein operates within carbohydrate metabolism; tricarboxylic acid cycle. Membrane-anchoring subunit of succinate dehydrogenase (SDH) that is involved in complex II of the mitochondrial electron transport chain and is responsible for transferring electrons from succinate to ubiquinone (coenzyme Q). SDH also oxidizes malate to the non-canonical enol form of oxaloacetate, enol-oxaloacetate. Enol-oxaloacetate, which is a potent inhibitor of the succinate dehydrogenase activity, is further isomerized into keto-oxaloacetate. In Homo sapiens (Human), this protein is Succinate dehydrogenase cytochrome b560 subunit, mitochondrial (SDHC).